The sequence spans 1125 residues: MSAHHAEQAESPLDNREKLTTAVDKLELVLPCAAPLYDFMHLNTMQGYHHISFAEAMAAHFELTGIRGYLPEEDFRKHYARGRIDDADLNESLANNTHGRNREIVLKVSGRPINKQDIWRISLIQDINPLSPSRFRWQIKEYDALERFQNGVPKSARDTLLNATQETDQNRRTESQAIRDLWEACLRVFQLENPNLHSEELGELVDLEEFSRSQAEGKQSKFRTSQPTLIPQEEMLAEARKDLHHLVDKVGEELSLRGLLQALTGEDLLDQVRPILIRFCASHLDEGFTAWSLPERGQGLYAAWRKCPFAELGLDLARLPDWQSFHAELPEHSVDAVIACLERLKIPESRWEGYLKRIAVELPGWSGLINWRHHRPKYKPNRKAPTSLMDYLAIRLFLDVIHIEQVTQNTWGIAGNLEELKTYFENYLWEFSGRYALFSNTLPEYLAIRAQELIALPRTAQKDRENWRTVSNMIHNWKHNPSAERTKRQTVHSHVWRLFCLAQHLGLPGNEVGKLSSSEAEQLLAILDELTTSERGYIWLCAYEYHYREDYFAALTQNHGRGRWANRNERPEAQLIFCFDDREEGIRRHLEEVNPNLETLGAPGFFGVPIQWRGLDYPDTTPHCPVVVTPVNELHEEPRPEAKKRYGLHKRLYNFKQFLLRVLHNKTRRDLLTSKVLIDVLFPGMLAVLAGKVFFPFQQASLKRKATAALVPPVPTQLKLTVPDDGTEATPDNLRVGFTDAEQAERLAAFLRAIGFTSGFAPLVVLSGHGSMSENNPQLASYDCGASGGRHGGPNARAFAAMANRPEIRARLAEQGIHIPDDTWFIGTEHDTCSESFPWFDLDKVPANFAPALKKLKAEVDQALLLSAHERCRRMASAPRKPSLQQARRHVAERGTDFSQARPELGHATVASALIGRRSVTRGIFLDRRCFVLSYDPTIDDAEGTILEGVLKNAGPVGVGINLDYYFSAANNQGFGSGSKVAQNVTGLFGVMQGIDDDLRTWCSYQMVDVHEPMRVLTVVEATTETLTAIYKRQPSSQEPAGGSWLLPPLRQLIDGGWLLLAAIHPKTGKISVFDPKQGFIPWKSYREPSPLPVVERSMDWYDGYSDPRPPALVEPKQTETHHAA.

4 residues coordinate Zn(2+): Cys578, Asp580, His769, and Cys784. Residues 1106–1125 (SDPRPPALVEPKQTETHHAA) are disordered.

The protein belongs to the inorganic carbon transporter (TC 9.A.2) DabA family. As to quaternary structure, forms a complex with DabB. Zn(2+) serves as cofactor.

The protein localises to the cell inner membrane. Part of an energy-coupled inorganic carbon pump. The polypeptide is Probable inorganic carbon transporter subunit DabA (Nitrosococcus oceani (strain ATCC 19707 / BCRC 17464 / JCM 30415 / NCIMB 11848 / C-107)).